A 160-amino-acid chain; its full sequence is Single-stranded DNA-binding protein 2 (160 aa).

Residues 2 to 104 form the SSB domain; that stretch reads MNRVVLVGRL…VVAESVQFLE (103 aa). The segment at 107 to 160 is disordered; sequence NNNVEGATSNNYQNKANYSNNNQTSSYRADTSQKSDSFASEGKPIDINEDDLPF. Over residues 115–129 the composition is skewed to low complexity; it reads SNNYQNKANYSNNNQ. Positions 130-144 are enriched in polar residues; it reads TSSYRADTSQKSDSF. Positions 155–160 match the Important for interaction with partner proteins motif; that stretch reads EDDLPF.

In terms of assembly, homotetramer.

In terms of biological role, plays an important role in DNA replication, recombination and repair. Binds to ssDNA and to an array of partner proteins to recruit them to their sites of action during DNA metabolism. The protein is Single-stranded DNA-binding protein 2 (ssb2) of Listeria monocytogenes serovar 1/2a (strain ATCC BAA-679 / EGD-e).